The sequence spans 64 residues: Large ribosomal subunit protein bL35 (64 aa).

The span at 1–17 shows a compositional bias: basic residues; it reads MKQKTHSGIKKRIKKTG. Positions 1–64 are disordered; sequence MKQKTHSGIK…KRVNRLLGEG (64 aa). Over residues 21 to 33 the composition is skewed to basic and acidic residues; the sequence is LRREQANRRHLLE.

The protein belongs to the bacterial ribosomal protein bL35 family.

The chain is Large ribosomal subunit protein bL35 from Corynebacterium kroppenstedtii (strain DSM 44385 / JCM 11950 / CIP 105744 / CCUG 35717).